The following is a 353-amino-acid chain: UPF0283 membrane protein YcjF (353 aa).

Over 1 to 69 (MTEPLKPRID…LRPKRSLWRK (69 aa)) the chain is Periplasmic. The helical transmembrane segment at 70–90 (MVMGGLALFGASVVGQGVQWT) threads the bilayer. The Cytoplasmic portion of the chain corresponds to 91–99 (MNAWQTQDW). The chain crosses the membrane as a helical span at residues 100-120 (VALGGCAAGALIIGAGVGSVV). Residues 121 to 212 (TEWRRLWRLR…ARREISRSAA (92 aa)) are Periplasmic-facing. The helical transmembrane segment at 213 to 233 (ESTLMIAVSPLALVDMAFIAW) threads the bilayer. The Cytoplasmic segment spans residues 234 to 353 (RNLRLINRIA…LQKGKTPSEK (120 aa)).

It belongs to the UPF0283 family.

The protein resides in the cell inner membrane. This Escherichia coli O157:H7 protein is UPF0283 membrane protein YcjF (ycjF).